The sequence spans 474 residues: ATP synthase subunit beta 2 (474 aa).

156–163 is a binding site for ATP; that stretch reads GGAGVGKT.

The protein belongs to the ATPase alpha/beta chains family. In terms of assembly, F-type ATPases have 2 components, CF(1) - the catalytic core - and CF(0) - the membrane proton channel. CF(1) has five subunits: alpha(3), beta(3), gamma(1), delta(1), epsilon(1). CF(0) has three main subunits: a(1), b(2) and c(9-12). The alpha and beta chains form an alternating ring which encloses part of the gamma chain. CF(1) is attached to CF(0) by a central stalk formed by the gamma and epsilon chains, while a peripheral stalk is formed by the delta and b chains.

The protein localises to the cell inner membrane. The catalysed reaction is ATP + H2O + 4 H(+)(in) = ADP + phosphate + 5 H(+)(out). Its function is as follows. Produces ATP from ADP in the presence of a proton gradient across the membrane. The catalytic sites are hosted primarily by the beta subunits. The polypeptide is ATP synthase subunit beta 2 (Shewanella frigidimarina (strain NCIMB 400)).